We begin with the raw amino-acid sequence, 107 residues long: Putative nucleosome assembly protein 1-like 6 (107 aa).

The protein belongs to the nucleosome assembly protein (NAP) family.

This Homo sapiens (Human) protein is Putative nucleosome assembly protein 1-like 6.